Reading from the N-terminus, the 161-residue chain is Nucleotide-binding protein BTH_I0730 (161 aa).

This sequence belongs to the YajQ family.

In terms of biological role, nucleotide-binding protein. This chain is Nucleotide-binding protein BTH_I0730, found in Burkholderia thailandensis (strain ATCC 700388 / DSM 13276 / CCUG 48851 / CIP 106301 / E264).